Reading from the N-terminus, the 139-residue chain is Nucleoside diphosphate kinase (139 aa).

ATP contacts are provided by Lys-10, Phe-58, Arg-86, Thr-92, Arg-103, and Asn-113. Catalysis depends on His-116, which acts as the Pros-phosphohistidine intermediate.

The protein belongs to the NDK family. Homotetramer. Mg(2+) serves as cofactor.

It localises to the cytoplasm. It catalyses the reaction a 2'-deoxyribonucleoside 5'-diphosphate + ATP = a 2'-deoxyribonucleoside 5'-triphosphate + ADP. It carries out the reaction a ribonucleoside 5'-diphosphate + ATP = a ribonucleoside 5'-triphosphate + ADP. In terms of biological role, major role in the synthesis of nucleoside triphosphates other than ATP. The ATP gamma phosphate is transferred to the NDP beta phosphate via a ping-pong mechanism, using a phosphorylated active-site intermediate. The chain is Nucleoside diphosphate kinase from Phenylobacterium zucineum (strain HLK1).